A 139-amino-acid polypeptide reads, in one-letter code: D-ribose pyranase (139 aa).

Histidine 20 (proton donor) is an active-site residue. Residues aspartate 28, histidine 106, and 128-130 (FAN) contribute to the substrate site.

This sequence belongs to the RbsD / FucU family. RbsD subfamily. In terms of assembly, homodecamer.

It localises to the cytoplasm. The catalysed reaction is beta-D-ribopyranose = beta-D-ribofuranose. It functions in the pathway carbohydrate metabolism; D-ribose degradation; D-ribose 5-phosphate from beta-D-ribopyranose: step 1/2. In terms of biological role, catalyzes the interconversion of beta-pyran and beta-furan forms of D-ribose. The chain is D-ribose pyranase from Yersinia pseudotuberculosis serotype O:1b (strain IP 31758).